Reading from the N-terminus, the 188-residue chain is NADH-quinone oxidoreductase subunit B 1 (188 aa).

Residues Cys39, Cys40, Cys105, and Cys134 each contribute to the [4Fe-4S] cluster site.

The protein belongs to the complex I 20 kDa subunit family. In terms of assembly, NDH-1 is composed of 14 different subunits. Subunits NuoB, C, D, E, F, and G constitute the peripheral sector of the complex. It depends on [4Fe-4S] cluster as a cofactor.

Its subcellular location is the cell inner membrane. It catalyses the reaction a quinone + NADH + 5 H(+)(in) = a quinol + NAD(+) + 4 H(+)(out). Its function is as follows. NDH-1 shuttles electrons from NADH, via FMN and iron-sulfur (Fe-S) centers, to quinones in the respiratory chain. The immediate electron acceptor for the enzyme in this species is believed to be ubiquinone. Couples the redox reaction to proton translocation (for every two electrons transferred, four hydrogen ions are translocated across the cytoplasmic membrane), and thus conserves the redox energy in a proton gradient. This is NADH-quinone oxidoreductase subunit B 1 from Solibacter usitatus (strain Ellin6076).